The chain runs to 492 residues: Sestrin-3 (492 aa).

The interval 62 to 243 (LVEEYSTSGR…VCDLANDNSI (182 aa)) is N-terminal domain; may mediate the alkylhydroperoxide reductase activity. Cysteine 121 acts as the Cysteine sulfenic acid (-SOH) intermediate in catalysis. The C-terminal domain; mediates TORC1 regulation stretch occupies residues 310 to 492 (PHSDFEDDVI…ALRAITRHLT (183 aa)). Residues 386–389 (TYNT), threonine 398, and glutamate 463 each bind L-leucine.

Belongs to the sestrin family. Interacts with the GATOR2 complex which is composed of MIOS, SEC13, SEH1L, WDR24 and WDR59; the interaction is not regulated by leucine. Interacts with RRAGA, RRAGB, RRAGC and RRAGD; may function as a guanine nucleotide dissociation inhibitor for RRAGs and regulate them. Interacts with the TORC2 complex; through RICTOR. As to expression, detected in liver and skeletal muscles.

Its subcellular location is the cytoplasm. It catalyses the reaction a hydroperoxide + L-cysteinyl-[protein] = S-hydroxy-L-cysteinyl-[protein] + an alcohol. May function as an intracellular leucine sensor that negatively regulates the TORC1 signaling pathway. May also regulate the insulin-receptor signaling pathway through activation of TORC2. This metabolic regulator may also play a role in protection against oxidative and genotoxic stresses. May prevent the accumulation of reactive oxygen species (ROS) through the alkylhydroperoxide reductase activity born by the N-terminal domain of the protein. The polypeptide is Sestrin-3 (Mus musculus (Mouse)).